The sequence spans 360 residues: Photosystem II protein D1 (360 aa).

A run of 3 helical transmembrane segments spans residues 30–47 (YVGWFGVLMIPCLLAATT), 119–134 (HFLIGISAYMGRQWEL), and 143–157 (WICVAYSAPVSAAFA). His119 contributes to the chlorophyll a binding site. Pheophytin a is bound at residue Tyr127. Asp171 and Glu190 together coordinate [CaMn4O5] cluster. Residues 198-219 (FHMAGVAGMFGGALFSAMHGSL) form a helical membrane-spanning segment. His199 is a chlorophyll a binding site. A quinone contacts are provided by residues His216 and 265 to 266 (SF). His216 is a binding site for Fe cation. Fe cation is bound at residue His273. The chain crosses the membrane as a helical span at residues 275–289 (FLASWPVICVWLTSM). Residues His333, Glu334, Asp343, and Ala345 each contribute to the [CaMn4O5] cluster site. Residues 346 to 360 (AAESTSVALVAPAIG) constitute a propeptide that is removed on maturation.

This sequence belongs to the reaction center PufL/M/PsbA/D family. PSII is composed of 1 copy each of membrane proteins PsbA, PsbB, PsbC, PsbD, PsbE, PsbF, PsbH, PsbI, PsbJ, PsbK, PsbL, PsbM, PsbT, PsbX, PsbY, Psb30/Ycf12, peripheral proteins PsbO, CyanoQ (PsbQ), PsbU, PsbV and a large number of cofactors. It forms dimeric complexes. Requires The D1/D2 heterodimer binds P680, chlorophylls that are the primary electron donor of PSII, and subsequent electron acceptors. It shares a non-heme iron and each subunit binds pheophytin, quinone, additional chlorophylls, carotenoids and lipids. D1 provides most of the ligands for the Mn4-Ca-O5 cluster of the oxygen-evolving complex (OEC). There is also a Cl(-1) ion associated with D1 and D2, which is required for oxygen evolution. The PSII complex binds additional chlorophylls, carotenoids and specific lipids. as cofactor. Post-translationally, tyr-162 forms a radical intermediate that is referred to as redox-active TyrZ, YZ or Y-Z. In terms of processing, C-terminally processed by CtpA; processing is essential to allow assembly of the oxygen-evolving complex and thus photosynthetic growth.

The protein localises to the cellular thylakoid membrane. It catalyses the reaction 2 a plastoquinone + 4 hnu + 2 H2O = 2 a plastoquinol + O2. In terms of biological role, photosystem II (PSII) is a light-driven water:plastoquinone oxidoreductase that uses light energy to abstract electrons from H(2)O, generating O(2) and a proton gradient subsequently used for ATP formation. It consists of a core antenna complex that captures photons, and an electron transfer chain that converts photonic excitation into a charge separation. The D1/D2 (PsbA/PsbD) reaction center heterodimer binds P680, the primary electron donor of PSII as well as several subsequent electron acceptors. This is Photosystem II protein D1 from Prochlorococcus marinus (strain NATL1A).